The following is a 492-amino-acid chain: Stomatal closure-related actin-binding protein 2 (492 aa).

Positions 112 to 132 form a coiled coil; that stretch reads LKKLRDALETMRGRMDGRNRE.

It belongs to the SCAB family. In terms of tissue distribution, expressed in roots, stems, leaves, siliques and flowers.

It localises to the cytoplasm. The protein resides in the cytoskeleton. In terms of biological role, probable plant-specific actin binding protein that bundles and stabilizes microfilaments (MFs). This chain is Stomatal closure-related actin-binding protein 2, found in Arabidopsis thaliana (Mouse-ear cress).